Reading from the N-terminus, the 415-residue chain is S-inosyl-L-homocysteine hydrolase (415 aa).

Substrate-binding residues include Asp123 and Glu148. Thr149 to Thr151 contributes to the NAD(+) binding site. Positions 178 and 182 each coordinate substrate. NAD(+) contacts are provided by residues Asn183, Gly212–Gly217, Glu235, Ala291–His293, and Asn337.

This sequence belongs to the adenosylhomocysteinase family. Requires NAD(+) as cofactor.

The protein resides in the cytoplasm. The catalysed reaction is S-inosyl-L-homocysteine + H2O = L-homocysteine + inosine. It participates in amino-acid biosynthesis; S-adenosyl-L-methionine biosynthesis. In terms of biological role, catalyzes the hydrolysis of S-inosyl-L-homocysteine (SIH) to L-homocysteine (Hcy) and inosine. Likely functions in a S-adenosyl-L-methionine (SAM) recycling pathway from S-adenosyl-L-homocysteine (SAH) produced from SAM-dependent methylation reactions. Can also catalyze the reverse reaction in vitro, i.e. the synthesis of SIH from Hcy and inosine. The sequence is that of S-inosyl-L-homocysteine hydrolase from Methanococcus maripaludis (strain DSM 14266 / JCM 13030 / NBRC 101832 / S2 / LL).